The primary structure comprises 455 residues: O-acyltransferase pigD (455 aa).

This sequence belongs to the trichothecene 3-O-acetyltransferase family.

Its pathway is secondary metabolite biosynthesis. In terms of biological role, O-acetyltransferase; part of the gene cluster that mediates the biosynthesis of azaphilone pigments (MonAzPs), a complex mixture of compounds with a common azaphilone skeleton very widely used as food colorants. Within the pathway, pigD directly transfers the fatty acyl chain from the beta-ketoacyl-ACP produced by the pigJ-pigK fatty acid synthase (FAS) to the C-4 alcohol. The first step of the pathway is performed by the nrPKS pigA that forms the hexaketide precursor from successive condensations of five malonyl-CoA units, with a simple acetyl-CoA starter unit. The role of esterase pigG is not clear, but it may play at most a supplementary role in the formation of the benzaldehyde produced by the pigA nrPKS. This very reactive benzaldehyde is intercepted by the pigC ketoreductase that to provide the first stable enzyme-free MonAzPs intermediate, 6-(4-hydroxy-2-oxopentyl)-3-methyl-2,4-dioxocyclohexane carbaldehyde, also known as M7PKS-1. The FAD-dependent monooxygenase pigN hydroxylates M7PKS-1 at C-4, which triggers the formation of the pyran ring. PigJ, pigK and pigD are involved in the acetylation of the pyran ring. PigJ and pigK form the two subunits of a dedicated fungal FAS that produces the side chain fatty acyl moiety of MonAzPs and pigD transfers the fatty acyl chain to the C-4 alcohol. PigM and pigO are involved in the elimination of the omega-1 alcohol. PigM acts as an O-acetyltransferase that synthesizes the putative O-11 acetyl intermediate whereas pigO eliminates acetic acid to yield an intermediate with a C10(11) double bond. The dehydration of the C-11 alcohol followed by the reduction of the C6(7) double bond by the NAD(P)H-dependent oxidoreductase pigE increases the electrophilicity of the C-5 ketone of the resulting acyl benzopyran. This in turn sets up the C-5 ketone for an intramolecular Knoevenagel aldol condensation with the C-20 enol of the side chain. This condensation affords the characteristic linear tricyclic carbon skeletons of the yellow pigments that serve as the common precursors for the classical yellow pigments monascin and ankaflavin, orange pigments rubopunctatin and monascorubrin, and red pigments ribropunctamine and monascorubramine. The FAD-dependent oxidoreductase pigF is especially invoved in the biosynthesis of orange and red pigments via desaturation of C6(7). This chain is O-acyltransferase pigD, found in Monascus ruber (Mold).